The sequence spans 415 residues: 6-phospho-beta-glucosidase BglT (415 aa).

1-64 (MRIAVIGGGS…DRFKVLISDT (64 aa)) contributes to the NAD(+) binding site. 2 residues coordinate substrate: Arg-87 and Asn-140. Cys-162 is a Mn(2+) binding site. Asn-163 contributes to the substrate binding site. Position 192 (His-192) interacts with Mn(2+). The active-site Proton acceptor is Tyr-241. Arg-261 lines the substrate pocket.

This sequence belongs to the glycosyl hydrolase 4 family. As to quaternary structure, homodimer or homotetramer. Exists in a homodimer/homotetramer equilibrium state in solution. The cofactor is NAD(+). It depends on Mn(2+) as a cofactor.

The catalysed reaction is 6-phospho-beta-D-glucosyl-(1-&gt;4)-D-glucose + H2O = D-glucose 6-phosphate + D-glucose. Hydrolyzes cellobiose 6'-phosphate into glucose 6-phosphate (Glc6P) and glucose. The chain is 6-phospho-beta-glucosidase BglT (bglT) from Thermotoga maritima (strain ATCC 43589 / DSM 3109 / JCM 10099 / NBRC 100826 / MSB8).